A 270-amino-acid chain; its full sequence is uncharacterized protein (270 aa).

The signal sequence occupies residues 1 to 23; it reads MFNFITFILFAVVCISYCHKSRG. 2 N-linked (GlcNAc...) asparagine glycosylation sites follow: N246 and N252.

Its subcellular location is the secreted. This is an uncharacterized protein from Caenorhabditis elegans.